The primary structure comprises 172 residues: Large ribosomal subunit protein bL17 (172 aa).

The span at 140 to 160 (LKAEAKAKREEKKPAKKEEKP) shows a compositional bias: basic and acidic residues. Residues 140–172 (LKAEAKAKREEKKPAKKEEKPKKAKKEKAAASN) are disordered.

The protein belongs to the bacterial ribosomal protein bL17 family. In terms of assembly, part of the 50S ribosomal subunit. Contacts protein L32.

The sequence is that of Large ribosomal subunit protein bL17 from Leptospira biflexa serovar Patoc (strain Patoc 1 / Ames).